A 236-amino-acid chain; its full sequence is E3 ubiquitin-protein ligase ATL41 (236 aa).

A helical membrane pass occupies residues 31 to 51 (IMLAAVASLSGVILIVFALHL). The segment at 108–150 (CAVCLSVLKEQDKARELPNCKHIFHVDCVDTWLTTCSTCPVCR) adopts an RING-type; atypical zinc-finger fold.

This sequence belongs to the RING-type zinc finger family. ATL subfamily.

It localises to the membrane. It carries out the reaction S-ubiquitinyl-[E2 ubiquitin-conjugating enzyme]-L-cysteine + [acceptor protein]-L-lysine = [E2 ubiquitin-conjugating enzyme]-L-cysteine + N(6)-ubiquitinyl-[acceptor protein]-L-lysine.. The protein operates within protein modification; protein ubiquitination. Its function is as follows. E3 ubiquitin-protein ligase able to catalyze polyubiquitination with ubiquitin-conjugating enzyme E2 UBC8, UBC10, UBC11, UBC28, UBC29, UBC30, UBC35 and UBC36 in vitro. The protein is E3 ubiquitin-protein ligase ATL41 (ATL41) of Arabidopsis thaliana (Mouse-ear cress).